A 188-amino-acid chain; its full sequence is Protein GrpE (188 aa).

A disordered region spans residues 1-22 (MADEQTLDTQNLDANQAPEASG).

Belongs to the GrpE family. In terms of assembly, homodimer.

The protein resides in the cytoplasm. Functionally, participates actively in the response to hyperosmotic and heat shock by preventing the aggregation of stress-denatured proteins, in association with DnaK and GrpE. It is the nucleotide exchange factor for DnaK and may function as a thermosensor. Unfolded proteins bind initially to DnaJ; upon interaction with the DnaJ-bound protein, DnaK hydrolyzes its bound ATP, resulting in the formation of a stable complex. GrpE releases ADP from DnaK; ATP binding to DnaK triggers the release of the substrate protein, thus completing the reaction cycle. Several rounds of ATP-dependent interactions between DnaJ, DnaK and GrpE are required for fully efficient folding. The sequence is that of Protein GrpE from Pseudomonas fluorescens (strain ATCC BAA-477 / NRRL B-23932 / Pf-5).